The primary structure comprises 274 residues: Glucosamine-6-phosphate deaminase (274 aa).

Asp-71 functions as the Proton acceptor; for enolization step in the catalytic mechanism. Asp-140 serves as the catalytic For ring-opening step. His-142 (proton acceptor; for ring-opening step) is an active-site residue. The active-site For ring-opening step is Glu-147.

The protein belongs to the glucosamine/galactosamine-6-phosphate isomerase family. NagB subfamily.

It catalyses the reaction alpha-D-glucosamine 6-phosphate + H2O = beta-D-fructose 6-phosphate + NH4(+). Its pathway is amino-sugar metabolism; N-acetylneuraminate degradation; D-fructose 6-phosphate from N-acetylneuraminate: step 5/5. Its function is as follows. Catalyzes the reversible isomerization-deamination of glucosamine 6-phosphate (GlcN6P) to form fructose 6-phosphate (Fru6P) and ammonium ion. The protein is Glucosamine-6-phosphate deaminase of Fusobacterium nucleatum subsp. nucleatum (strain ATCC 25586 / DSM 15643 / BCRC 10681 / CIP 101130 / JCM 8532 / KCTC 2640 / LMG 13131 / VPI 4355).